A 235-amino-acid polypeptide reads, in one-letter code: MRFDPPLEEGHLLRRYKRFFADIETPDGEALCIHCPNTGSMFNCMAEGGRVWFSRSNDPRRKLPGTWELSETPQGRLACVNTARANPLVEEALRAGSIAELTGFTGLRREVRYGLENSRVDFCLDYPDGTAFVEVKSVTLGFADSPVAAFPDARTERGAKHLRELAVLARQGVRTVQLYCVNLSGIAAVRPAAEIDPGYAQALREAVAAGVEVLAYGAELSPAAIRLVRRLEVCL.

The protein belongs to the SfsA family.

The sequence is that of Sugar fermentation stimulation protein homolog from Azotobacter vinelandii (strain DJ / ATCC BAA-1303).